The primary structure comprises 308 residues: Type II restriction enzyme MamI (308 aa).

The catalysed reaction is Endonucleolytic cleavage of DNA to give specific double-stranded fragments with terminal 5'-phosphates.. In terms of biological role, a P subtype restriction enzyme that recognizes the double-stranded sequence 5'-GATNNNNATC-3' and cleaves after N-5. In Microbacterium ammoniaphilum, this protein is Type II restriction enzyme MamI.